Here is a 781-residue protein sequence, read N- to C-terminus: Putative amine oxidase [copper-containing] (781 aa).

The signal sequence occupies residues 1–34 (MSLPKTANGMDKLKLCYLLLFYLGSSSLTEVSGA). A disulfide bond links cysteine 199 and cysteine 203. 385-395 (FFDSSYMIGMN) serves as a coordination point for substrate. Aspartate 387 functions as the Proton acceptor in the catalytic mechanism. Cysteine 405 and cysteine 432 are joined by a disulfide. 472 to 477 (IANYDY) is a binding site for substrate. The active-site Schiff-base intermediate with substrate; via topaquinone is tyrosine 475. The residue at position 475 (tyrosine 475) is a 2',4',5'-topaquinone. The Cu cation site is built by histidine 525 and histidine 527. Residues aspartate 534, aspartate 536, glutamate 579, phenylalanine 671, aspartate 674, glutamate 676, aspartate 682, and leucine 683 each contribute to the Ca(2+) site. Positions 534 and 536 each coordinate Mn(2+). Aspartate 682 lines the Mn(2+) pocket. Residue histidine 693 participates in Cu cation binding.

Belongs to the copper/topaquinone oxidase family. Homodimer. Cu cation serves as cofactor. Requires Ca(2+) as cofactor. The cofactor is L-topaquinone. Mn(2+) is required as a cofactor. Post-translationally, topaquinone (TPQ) is generated by copper-dependent autoxidation of a specific tyrosyl residue. Prismatic layer of shell (at protein level). Expressed primarily in the mantle with highest level in the mantle edge and lower level in the mantle pallium.

The protein resides in the secreted. The chain is Putative amine oxidase [copper-containing] from Margaritifera margaritifera (Freshwater pearl mussel).